The following is a 319-amino-acid chain: ATP-dependent 6-phosphofructokinase (319 aa).

Residue G11 participates in ATP binding. 21–25 (RAVVR) is a binding site for ADP. ATP is bound by residues 72 to 73 (RC) and 102 to 105 (GDGS). D103 provides a ligand contact to Mg(2+). 125–127 (TID) is a substrate binding site. The active-site Proton acceptor is the D127. R154 serves as a coordination point for ADP. Residues R162 and 169–171 (MGR) contribute to the substrate site. ADP contacts are provided by residues 185–187 (GAE), R211, and 213–215 (KKH). Substrate is bound by residues E222, R243, and 249-252 (HIQR).

This sequence belongs to the phosphofructokinase type A (PFKA) family. ATP-dependent PFK group I subfamily. Prokaryotic clade 'B1' sub-subfamily. In terms of assembly, homotetramer. It depends on Mg(2+) as a cofactor.

Its subcellular location is the cytoplasm. It carries out the reaction beta-D-fructose 6-phosphate + ATP = beta-D-fructose 1,6-bisphosphate + ADP + H(+). The protein operates within carbohydrate degradation; glycolysis; D-glyceraldehyde 3-phosphate and glycerone phosphate from D-glucose: step 3/4. Allosterically activated by ADP and other diphosphonucleosides, and allosterically inhibited by phosphoenolpyruvate. Catalyzes the phosphorylation of D-fructose 6-phosphate to fructose 1,6-bisphosphate by ATP, the first committing step of glycolysis. This Shouchella clausii (strain KSM-K16) (Alkalihalobacillus clausii) protein is ATP-dependent 6-phosphofructokinase.